The sequence spans 94 residues: Small ribosomal subunit protein uS19 (94 aa).

This sequence belongs to the universal ribosomal protein uS19 family.

Its function is as follows. Protein S19 forms a complex with S13 that binds strongly to the 16S ribosomal RNA. The polypeptide is Small ribosomal subunit protein uS19 (Acetivibrio thermocellus (strain ATCC 27405 / DSM 1237 / JCM 9322 / NBRC 103400 / NCIMB 10682 / NRRL B-4536 / VPI 7372) (Clostridium thermocellum)).